The primary structure comprises 354 residues: Myosin-binding protein H-like (354 aa).

The interval 1-47 (MEAATAPEVAAGSKLKVKEASPADAEPPQASPGQGAGSPTPQLLPPI) is disordered. Ser38 is modified (phosphoserine). Residues 45–139 (PPIEEHPKIW…GGLEATATID (95 aa)) form the Ig-like C2-type 1 domain. One can recognise a Fibronectin type-III domain in the interval 148–238 (PPQSIKLVDV…ETAPITTDLA (91 aa)). The Ig-like C2-type 2 domain maps to 261–345 (PKFTQPLADC…VNPLGEASVD (85 aa)). Cys282 and Cys333 are joined by a disulfide. Arg321 carries the post-translational modification Omega-N-methylarginine.

The protein belongs to the immunoglobulin superfamily. MyBP family. In terms of tissue distribution, expressed in heart, with higher expression in the atria. Expressed in left atrium and ventricle, arteria mammaria interna and skeletal muscle. As to expression, expressed specifically en the left atrium.

The protein resides in the cytoplasm. The protein localises to the myofibril. Its subcellular location is the sarcomere. Its function is as follows. Myosin-binding protein which plays a role in cardiac function. Seems to regulate conduction in the atria and ventricular conduction systems. This Homo sapiens (Human) protein is Myosin-binding protein H-like.